A 573-amino-acid polypeptide reads, in one-letter code: Dilute domain-containing protein SPAC25B8.08 (573 aa).

Residues 180–464 (NAFLCEVNQV…LKKLDAFHEE (285 aa)) form the Dilute domain.

The protein localises to the cytoplasm. It is found in the golgi apparatus. The chain is Dilute domain-containing protein SPAC25B8.08 from Schizosaccharomyces pombe (strain 972 / ATCC 24843) (Fission yeast).